A 249-amino-acid polypeptide reads, in one-letter code: Triosephosphate isomerase (249 aa).

A substrate-binding site is contributed by 9 to 11; that stretch reads NWK. The active-site Electrophile is the H94. E166 functions as the Proton acceptor in the catalytic mechanism. Substrate contacts are provided by residues G172, S214, and 235 to 236; that span reads GG.

Belongs to the triosephosphate isomerase family. In terms of assembly, homodimer.

Its subcellular location is the cytoplasm. It carries out the reaction D-glyceraldehyde 3-phosphate = dihydroxyacetone phosphate. It functions in the pathway carbohydrate biosynthesis; gluconeogenesis. It participates in carbohydrate degradation; glycolysis; D-glyceraldehyde 3-phosphate from glycerone phosphate: step 1/1. Functionally, involved in the gluconeogenesis. Catalyzes stereospecifically the conversion of dihydroxyacetone phosphate (DHAP) to D-glyceraldehyde-3-phosphate (G3P). The protein is Triosephosphate isomerase of Leptospira biflexa serovar Patoc (strain Patoc 1 / Ames).